A 297-amino-acid chain; its full sequence is Acetylglutamate kinase (297 aa).

Substrate contacts are provided by residues 68-69 (GG), arginine 90, and asparagine 195.

It belongs to the acetylglutamate kinase family. ArgB subfamily.

Its subcellular location is the cytoplasm. The catalysed reaction is N-acetyl-L-glutamate + ATP = N-acetyl-L-glutamyl 5-phosphate + ADP. The protein operates within amino-acid biosynthesis; L-arginine biosynthesis; N(2)-acetyl-L-ornithine from L-glutamate: step 2/4. In terms of biological role, catalyzes the ATP-dependent phosphorylation of N-acetyl-L-glutamate. The sequence is that of Acetylglutamate kinase from Mesorhizobium japonicum (strain LMG 29417 / CECT 9101 / MAFF 303099) (Mesorhizobium loti (strain MAFF 303099)).